Consider the following 221-residue polypeptide: 5-methylthioribulose-1-phosphate/5-deoxyribulose-1-phosphate aldolase (221 aa).

E75 acts as the Proton donor/acceptor in catalysis. Positions 75, 94, 96, and 157 each coordinate Co(2+).

It belongs to the aldolase class II family. Requires Co(2+) as cofactor.

The catalysed reaction is 5-(methylsulfanyl)-D-ribulose 1-phosphate = 2-(methylsulfanyl)acetaldehyde + dihydroxyacetone phosphate. It catalyses the reaction 5-deoxy-D-ribulose 1-phosphate = dihydroxyacetone phosphate + acetaldehyde. The protein operates within amino-acid biosynthesis; L-methionine biosynthesis via salvage pathway. In terms of biological role, uses 5-methylthioribulose-1-phosphate to yield 2-(methylthio)acetaldehyde and dihydroxyacetone phosphate. Can also use 5-deoxyribulose 1-phosphate to yield acetaldehyde and dihydroxyacetone phosphate. Part of a bifunctional DHAP-shunt salvage pathway for SAM by-products. This Rhodospirillum rubrum (strain ATCC 11170 / ATH 1.1.1 / DSM 467 / LMG 4362 / NCIMB 8255 / S1) protein is 5-methylthioribulose-1-phosphate/5-deoxyribulose-1-phosphate aldolase.